A 129-amino-acid polypeptide reads, in one-letter code: Class I hydrophobin 11 (129 aa).

Positions Met1–Ala19 are cleaved as a signal peptide. 4 disulfide bridges follow: Cys48–Cys106, Cys55–Cys100, Cys56–Cys89, and Cys107–Cys122.

Belongs to the fungal hydrophobin family. In terms of assembly, self-assembles to form functional amyloid fibrils called rodlets. Self-assembly into fibrillar rodlets occurs spontaneously at hydrophobic:hydrophilic interfaces and the rodlets further associate laterally to form amphipathic monolayers.

The protein resides in the secreted. The protein localises to the cell wall. In terms of biological role, aerial growth, conidiation, and dispersal of filamentous fungi in the environment rely upon a capability of their secreting small amphipathic proteins called hydrophobins (HPBs) with low sequence identity. Class I can self-assemble into an outermost layer of rodlet bundles on aerial cell surfaces, conferring cellular hydrophobicity that supports fungal growth, development and dispersal; whereas Class II form highly ordered films at water-air interfaces through intermolecular interactions but contribute nothing to the rodlet structure. This chain is Class I hydrophobin 11, found in Pleurotus ostreatus (strain PC15) (Oyster mushroom).